We begin with the raw amino-acid sequence, 251 residues long: MTNQNMPPETPIIWLNFSPALRRFDRPLLRQLGKSQAILQWDYHQTADEPNCLTVGLDLIGEYLENFHQPVHLIGHSTSGLLALLYARQCPEKVRSLSLLSVGVYPALDWQAHYYSQFDAMRYSRHLLLGQMAHHLFNCRSLRQTQTIVNILENDLLTSISPHSLYKQLIILPNHIAVPLLVAVGETDGIIDTSLFNGWQRWKKPGDRLWLCPEGKYFFQFEHPEITAFQLQQFWRSLQGQEASSSTSLLA.

The protein to Anabaena PCC 7120 alr2406.

This is an uncharacterized protein from Synechocystis sp. (strain ATCC 27184 / PCC 6803 / Kazusa).